We begin with the raw amino-acid sequence, 116 residues long: Aspartate 1-decarboxylase (116 aa).

Residue Ser-25 is the Schiff-base intermediate with substrate; via pyruvic acid of the active site. A Pyruvic acid (Ser) modification is found at Ser-25. A substrate-binding site is contributed by Thr-57. Catalysis depends on Tyr-58, which acts as the Proton donor. Substrate is bound at residue 72–74 (GAA).

It belongs to the PanD family. In terms of assembly, heterooctamer of four alpha and four beta subunits. Pyruvate is required as a cofactor. Post-translationally, is synthesized initially as an inactive proenzyme, which is activated by self-cleavage at a specific serine bond to produce a beta-subunit with a hydroxyl group at its C-terminus and an alpha-subunit with a pyruvoyl group at its N-terminus.

The protein resides in the cytoplasm. The catalysed reaction is L-aspartate + H(+) = beta-alanine + CO2. It participates in cofactor biosynthesis; (R)-pantothenate biosynthesis; beta-alanine from L-aspartate: step 1/1. Functionally, catalyzes the pyruvoyl-dependent decarboxylation of aspartate to produce beta-alanine. The chain is Aspartate 1-decarboxylase from Helicobacter pylori (strain HPAG1).